The chain runs to 163 residues: NAD(P)H-quinone oxidoreductase subunit I, chloroplastic (163 aa).

4Fe-4S ferredoxin-type domains lie at 55 to 84 (GRIH…VDWK) and 95 to 124 (LNYS…MTEE). [4Fe-4S] cluster is bound by residues cysteine 64, cysteine 67, cysteine 70, cysteine 74, cysteine 104, cysteine 107, cysteine 110, and cysteine 114.

This sequence belongs to the complex I 23 kDa subunit family. As to quaternary structure, NDH is composed of at least 16 different subunits, 5 of which are encoded in the nucleus. [4Fe-4S] cluster serves as cofactor.

Its subcellular location is the plastid. The protein resides in the chloroplast thylakoid membrane. It carries out the reaction a plastoquinone + NADH + (n+1) H(+)(in) = a plastoquinol + NAD(+) + n H(+)(out). The enzyme catalyses a plastoquinone + NADPH + (n+1) H(+)(in) = a plastoquinol + NADP(+) + n H(+)(out). NDH shuttles electrons from NAD(P)H:plastoquinone, via FMN and iron-sulfur (Fe-S) centers, to quinones in the photosynthetic chain and possibly in a chloroplast respiratory chain. The immediate electron acceptor for the enzyme in this species is believed to be plastoquinone. Couples the redox reaction to proton translocation, and thus conserves the redox energy in a proton gradient. The protein is NAD(P)H-quinone oxidoreductase subunit I, chloroplastic of Glycine max (Soybean).